The chain runs to 331 residues: UPF0194 membrane protein YbhG (331 aa).

Residues 1-19 form the signal peptide; the sequence is MKKPVVIGLAIAAIVAVIA. The stretch at 107–208 forms a coiled coil; sequence EEIAQAAAAV…LDLQDTTLIA (102 aa).

This sequence belongs to the UPF0194 family.

Its subcellular location is the periplasm. The sequence is that of UPF0194 membrane protein YbhG from Salmonella agona (strain SL483).